The following is a 434-amino-acid chain: Prenyltransferase penG (434 aa).

Composition is skewed to polar residues over residues 1–14 (MTQDVVTVSSQTAG) and 21–35 (THSNPDNKTTSPSTW). The segment at 1 to 35 (MTQDVVTVSSQTAGTIKESGTHSNPDNKTTSPSTW) is disordered. L-tryptophan is bound by residues 104–105 (EI) and E108. The substrate site is built by R122, K208, R275, K277, Y279, and Y348.

The protein belongs to the tryptophan dimethylallyltransferase family.

It catalyses the reaction yaequinolone E + dimethylallyl diphosphate + H2O = [(1'E)-3'-hydroxy-3',7'-dimethylocta-1',6'-dien-1'-yl]-quinolinone B + diphosphate. The protein operates within secondary metabolite biosynthesis. It functions in the pathway alkaloid biosynthesis. It participates in mycotoxin biosynthesis. Prenyltransferase; part of the gene cluster that mediates the biosynthesis of penigequinolones, potent insecticidal alkaloids that contain a highly modified 10-carbon prenyl group. The first stage is catalyzed by the nonribosomal peptide synthetase penN that condenses anthranilic acid and O-methyl-L-tyrosine to produce 4'-methoxycyclopeptin. 4'-methoxycyclopeptin is then converted to 4'-methoxydehydrocyclopeptin by the ketoglutarate-dependent dioxygenase penM through dehydrogenation to form a double bond between C-alpha and C-beta of the O-methyltyrosine side chain. PenM also converts its first product methoxydehydrocyclopeptin to 4'-methoxycyclopenin. The following conversion of 4'methoxycyclopenin into 4'-methoxyviridicatin is catalyzed by the cyclopenase penL. 4'-methoxyviridicatin is the precursor of quinolone natural products, and is further converted to quinolinone B. The prenyltransferase penI then catalyzes the canonical Friedel-Crafts alkylation of quinolinone B with dimethylallyl cation to yield dimethylallyl quinolone, which is subjected to FAD-dependent dehydrogenation by the FAD-linked oxidoreductase penH to yield conjugated aryl diene. The delta(3') double bond then serves as the site of the second alkylation with DMAPP catalyzed by the prenyltransferase penG to yield a carbenium ion intermediate, which can be attacked by H(2)O to yield a styrenyl quinolone containing a C3'-hydroxyprenyl chain, or undergo cyclization to yield yaequinolones J1 and J2. The conversion of the styrenyl quinolone into the tetrahydrofuran-containing yaequinolone C is performed by the FAD-dependent monooxygenase penE and involves epoxidation of the terminal C7'-C8' olefin, followed by epoxide ring opening initiated by the C3' hydroxyl group. The predicted cysteine hydrolase penJ acts as an epoxide hydrolase that enhances the rate of the 5-exo-tet cyclization step, increasing the yield of yaequinolone C. PenF catalyzes the cationic rearrangement of the epoxide formed by penE (before ring opening to produce yaequinolone C) into yaequinolone D. Finally, the short-chain dehydrogenase/reductase (SDR)-like reductase penD, catalyzes both the dehydration of yaequinolone D and the reduction of the resulting oxonium to yield penigequinolone. This chain is Prenyltransferase penG, found in Penicillium thymicola.